The sequence spans 156 residues: RNA pyrophosphohydrolase (156 aa).

The Nudix hydrolase domain maps to 6 to 148; it reads NYRPNVAAIV…KKNIYVRVIK (143 aa). The Nudix box signature appears at 43-64; sequence GGIDKGESVKNALFRELKEEIG.

It belongs to the Nudix hydrolase family. RppH subfamily. It depends on a divalent metal cation as a cofactor.

Its function is as follows. Accelerates the degradation of transcripts by removing pyrophosphate from the 5'-end of triphosphorylated RNA, leading to a more labile monophosphorylated state that can stimulate subsequent ribonuclease cleavage. This Campylobacter jejuni subsp. jejuni serotype O:2 (strain ATCC 700819 / NCTC 11168) protein is RNA pyrophosphohydrolase.